A 156-amino-acid polypeptide reads, in one-letter code: Nascent polypeptide-associated complex subunit beta (156 aa).

Disordered stretches follow at residues 1–42 (MPID…KDDT) and 129–156 (QANE…AEVE). An NAC-A/B domain is found at 38-103 (NKDDTKLHNQ…AQEKNLQELF (66 aa)).

The protein belongs to the NAC-beta family. In terms of assembly, part of the nascent polypeptide-associated complex (NAC), consisting of EGD2 and EGD1. NAC associates with ribosomes via EGD1.

It localises to the cytoplasm. Its subcellular location is the nucleus. Its function is as follows. Component of the nascent polypeptide-associated complex (NAC), a dynamic component of the ribosomal exit tunnel, protecting the emerging polypeptides from interaction with other cytoplasmic proteins to ensure appropriate nascent protein targeting. The NAC complex also promotes mitochondrial protein import by enhancing productive ribosome interactions with the outer mitochondrial membrane and blocks the inappropriate interaction of ribosomes translating non-secretory nascent polypeptides with translocation sites in the membrane of the endoplasmic reticulum. EGD1 may act as a transcription factor that exert a negative effect on the expression of several genes that are transcribed by RNA polymerase II. The protein is Nascent polypeptide-associated complex subunit beta (EGD1) of Candida glabrata (strain ATCC 2001 / BCRC 20586 / JCM 3761 / NBRC 0622 / NRRL Y-65 / CBS 138) (Yeast).